The primary structure comprises 465 residues: 23S rRNA (uracil(1939)-C(5))-methyltransferase RlmD (465 aa).

A disordered region spans residues 1-22 (MSEAVPTSARKSRNAPVAPGPA). The region spanning 16-80 (PVAPGPAPVL…PSYEQATVVD (65 aa)) is the TRAM domain. C93, C99, C102, and C181 together coordinate [4Fe-4S] cluster. The S-adenosyl-L-methionine site is built by Q289, F318, N323, E339, N367, and D388. C421 serves as the catalytic Nucleophile.

The protein belongs to the class I-like SAM-binding methyltransferase superfamily. RNA M5U methyltransferase family. RlmD subfamily.

It catalyses the reaction uridine(1939) in 23S rRNA + S-adenosyl-L-methionine = 5-methyluridine(1939) in 23S rRNA + S-adenosyl-L-homocysteine + H(+). In terms of biological role, catalyzes the formation of 5-methyl-uridine at position 1939 (m5U1939) in 23S rRNA. This chain is 23S rRNA (uracil(1939)-C(5))-methyltransferase RlmD, found in Burkholderia lata (strain ATCC 17760 / DSM 23089 / LMG 22485 / NCIMB 9086 / R18194 / 383).